We begin with the raw amino-acid sequence, 238 residues long: Ribosome-recycling factor, mitochondrial (238 aa).

Belongs to the RRF family.

It localises to the mitochondrion. Its function is as follows. Responsible for the release of ribosomes from messenger RNA at the termination of protein biosynthesis. May increase the efficiency of translation by recycling ribosomes from one round of translation to another. The polypeptide is Ribosome-recycling factor, mitochondrial (Caenorhabditis elegans).